We begin with the raw amino-acid sequence, 386 residues long: Succinate--CoA ligase [ADP-forming] subunit beta (386 aa).

In terms of domain architecture, ATP-grasp spans 9–244; it reads KEIFRKYGVP…LAEEEPREIQ (236 aa). ATP-binding positions include Lys-46, 53–55, Glu-99, Leu-102, and Glu-107; that span reads GRG. Mg(2+) contacts are provided by Asn-199 and Asp-213. Residues Asn-264 and 321–323 each bind substrate; that span reads GIM.

It belongs to the succinate/malate CoA ligase beta subunit family. As to quaternary structure, heterotetramer of two alpha and two beta subunits. Mg(2+) is required as a cofactor.

The catalysed reaction is succinate + ATP + CoA = succinyl-CoA + ADP + phosphate. It catalyses the reaction GTP + succinate + CoA = succinyl-CoA + GDP + phosphate. The protein operates within carbohydrate metabolism; tricarboxylic acid cycle; succinate from succinyl-CoA (ligase route): step 1/1. Its function is as follows. Succinyl-CoA synthetase functions in the citric acid cycle (TCA), coupling the hydrolysis of succinyl-CoA to the synthesis of either ATP or GTP and thus represents the only step of substrate-level phosphorylation in the TCA. The beta subunit provides nucleotide specificity of the enzyme and binds the substrate succinate, while the binding sites for coenzyme A and phosphate are found in the alpha subunit. The chain is Succinate--CoA ligase [ADP-forming] subunit beta from Myxococcus xanthus (strain DK1622).